Here is a 444-residue protein sequence, read N- to C-terminus: Phosphoglucosamine mutase (444 aa).

S103 functions as the Phosphoserine intermediate in the catalytic mechanism. Mg(2+) contacts are provided by S103, D241, D243, and D245. S103 is subject to Phosphoserine.

It belongs to the phosphohexose mutase family. It depends on Mg(2+) as a cofactor. In terms of processing, activated by phosphorylation.

It catalyses the reaction alpha-D-glucosamine 1-phosphate = D-glucosamine 6-phosphate. Functionally, catalyzes the conversion of glucosamine-6-phosphate to glucosamine-1-phosphate. The sequence is that of Phosphoglucosamine mutase from Deinococcus radiodurans (strain ATCC 13939 / DSM 20539 / JCM 16871 / CCUG 27074 / LMG 4051 / NBRC 15346 / NCIMB 9279 / VKM B-1422 / R1).